The following is a 416-amino-acid chain: Cotranscriptional regulator ARB2A (416 aa).

The first 18 residues, 1–18 (MSISLSSLILLPIWINMA), serve as a signal peptide directing secretion. Positions 208–247 (KPKIHVQSSSDSSDEPAEKRERKDKVSKETKKRRDFYEKY) are disordered. Positions 223 to 236 (PAEKRERKDKVSKE) are enriched in basic and acidic residues. Catalysis depends on Ser-293, which acts as the Nucleophile. A Prevents secretion from ER motif is present at residues 413 to 416 (HEEL).

This sequence belongs to the ARB2A family. In terms of assembly, interacts with AGO2. Found in a complex, composed of AGO2, CHD7 and ARB2A.

The protein localises to the nucleus. It localises to the cytoplasm. Its subcellular location is the endoplasmic reticulum. Its function is as follows. Plays a role in the regulation of alternative splicing, by interacting with AGO2 and CHD7. Seems to be required for stabilizing protein-protein interactions at the chromatin-spliceosome interface. May have hydrolase activity. In Homo sapiens (Human), this protein is Cotranscriptional regulator ARB2A.